The chain runs to 133 residues: Small ribosomal subunit protein uS11 (133 aa).

It belongs to the universal ribosomal protein uS11 family. In terms of assembly, part of the 30S ribosomal subunit. Interacts with proteins S7 and S18. Binds to IF-3.

Located on the platform of the 30S subunit, it bridges several disparate RNA helices of the 16S rRNA. Forms part of the Shine-Dalgarno cleft in the 70S ribosome. The protein is Small ribosomal subunit protein uS11 of Chlamydia pneumoniae (Chlamydophila pneumoniae).